The chain runs to 181 residues: Epidermin decarboxylase (181 aa).

His67 is a catalytic residue.

Belongs to the HFCD (homooligomeric flavin containing Cys decarboxylase) superfamily. In terms of assembly, homododecamer. FMN serves as cofactor.

Functionally, catalyzes the removal of two reducing equivalents (oxidative decarboxylation) from the cysteine residue of the C-terminal meso-lanthionine of epidermin to form a --C==C-- double bond. The polypeptide is Epidermin decarboxylase (epiD) (Staphylococcus epidermidis).